A 75-amino-acid polypeptide reads, in one-letter code: uncharacterized protein (75 aa).

This is an uncharacterized protein from Orgyia pseudotsugata (Douglas-fir tussock moth).